A 247-amino-acid chain; its full sequence is MSKQPDRLFSQPLEQVPDFVFNEDVVRVFPDMIKRSVPGYPTIVENLGVLAARFAQPGTALYDLGASLGAVTQSLRRHVRSDGCRVIAVDNSAAMVERCRQYLTAQDSMFQELLPVHVLEADILALPFEPASVVAMNFTLQFIAPDQRLELLGRIRQALLPGGALILSEKLRFADEQAQDLLNELHLDFKRANGYSELEIAQKRSAIENVMKPDTLETHQERLRAAGFSKVVPWFQCLNFASLIALP.

S-adenosyl-L-methionine contacts are provided by residues tyrosine 40, 65 to 67, 90 to 91, 122 to 123, asparagine 137, and arginine 204; these read GAS, DN, and DI.

Belongs to the class I-like SAM-binding methyltransferase superfamily. Cx-SAM synthase family. As to quaternary structure, homodimer.

It carries out the reaction prephenate + S-adenosyl-L-methionine = carboxy-S-adenosyl-L-methionine + 3-phenylpyruvate + H2O. Its function is as follows. Catalyzes the conversion of S-adenosyl-L-methionine (SAM) to carboxy-S-adenosyl-L-methionine (Cx-SAM). The protein is Carboxy-S-adenosyl-L-methionine synthase of Pseudomonas putida (strain ATCC 700007 / DSM 6899 / JCM 31910 / BCRC 17059 / LMG 24140 / F1).